The following is a 400-amino-acid chain: Phosphoglycerate kinase (400 aa).

Residues 22–24, Arg-38, 61–64, Arg-119, and Arg-152 contribute to the substrate site; these read DFN and HLGR. ATP-binding positions include Lys-205, Gly-296, Glu-327, and 353-356; that span reads GGDT.

It belongs to the phosphoglycerate kinase family. Monomer.

It is found in the cytoplasm. The catalysed reaction is (2R)-3-phosphoglycerate + ATP = (2R)-3-phospho-glyceroyl phosphate + ADP. Its pathway is carbohydrate degradation; glycolysis; pyruvate from D-glyceraldehyde 3-phosphate: step 2/5. The chain is Phosphoglycerate kinase from Campylobacter lari (strain RM2100 / D67 / ATCC BAA-1060).